The following is a 209-amino-acid chain: V-type ATP synthase subunit D (209 aa).

This sequence belongs to the V-ATPase D subunit family.

Produces ATP from ADP in the presence of a proton gradient across the membrane. In Anaeromyxobacter dehalogenans (strain 2CP-1 / ATCC BAA-258), this protein is V-type ATP synthase subunit D.